The primary structure comprises 154 residues: Endoribonuclease YbeY (154 aa).

Zn(2+)-binding residues include histidine 113, histidine 117, and histidine 123.

This sequence belongs to the endoribonuclease YbeY family. Zn(2+) serves as cofactor.

It localises to the cytoplasm. In terms of biological role, single strand-specific metallo-endoribonuclease involved in late-stage 70S ribosome quality control and in maturation of the 3' terminus of the 16S rRNA. The sequence is that of Endoribonuclease YbeY from Ehrlichia canis (strain Jake).